Reading from the N-terminus, the 134-residue chain is ATP synthase epsilon chain (134 aa).

It belongs to the ATPase epsilon chain family. As to quaternary structure, F-type ATPases have 2 components, CF(1) - the catalytic core - and CF(0) - the membrane proton channel. CF(1) has five subunits: alpha(3), beta(3), gamma(1), delta(1), epsilon(1). CF(0) has three main subunits: a, b and c.

It localises to the cell membrane. Functionally, produces ATP from ADP in the presence of a proton gradient across the membrane. The sequence is that of ATP synthase epsilon chain from Ruminococcus albus (strain ATCC 27210 / DSM 20455 / JCM 14654 / NCDO 2250 / 7).